A 124-amino-acid chain; its full sequence is Iron-sulfur cluster insertion protein ErpA (124 aa).

Iron-sulfur cluster contacts are provided by C52, C116, and C118.

The protein belongs to the HesB/IscA family. In terms of assembly, homodimer. Requires iron-sulfur cluster as cofactor.

In terms of biological role, required for insertion of 4Fe-4S clusters for at least IspG. This chain is Iron-sulfur cluster insertion protein ErpA, found in Vibrio atlanticus (strain LGP32) (Vibrio splendidus (strain Mel32)).